A 593-amino-acid chain; its full sequence is UvrABC system protein C (593 aa).

Residues 13–91 form the GIY-YIG domain; sequence TTPGVYMMKD…IKEYRPKYNV (79 aa). The UVR domain maps to 202–237; the sequence is DEIVEELKKKMFEYADNLMFEKAQEIKNKITSLEQI.

The protein belongs to the UvrC family. Interacts with UvrB in an incision complex.

The protein localises to the cytoplasm. Functionally, the UvrABC repair system catalyzes the recognition and processing of DNA lesions. UvrC both incises the 5' and 3' sides of the lesion. The N-terminal half is responsible for the 3' incision and the C-terminal half is responsible for the 5' incision. This chain is UvrABC system protein C, found in Caldicellulosiruptor saccharolyticus (strain ATCC 43494 / DSM 8903 / Tp8T 6331).